A 668-amino-acid polypeptide reads, in one-letter code: E3 ubiquitin-protein ligase RNF139 (668 aa).

Position 2 is an N-acetylalanine (alanine 2). 11 helical membrane passes run 51–71, 85–105, 125–145, 154–174, 178–198, 293–313, 323–343, 356–376, 390–410, 420–440, and 470–490; these read IGLQ…VLIL, AFLL…HIDF, SLWM…VTLL, LMIL…PLHI, VVLM…AVKL, GMSA…LAFI, LGFV…LSGL, MCLL…PVLM, FPVL…SYVL, LFAV…SLTV, and IIEF…MMFE. The segment at 547–586 adopts an RING-type; atypical zinc-finger fold; that stretch reads CAICYHEFTTSARITPCNHYFHALCLRKWLYIQDTCPMCH. Residues 602-668 form a disordered region; sequence SNNNGFIAPN…AAAEFNDDTD (67 aa). Positions 618–630 are enriched in basic and acidic residues; the sequence is EALREDAAGSDRE. Over residues 631–641 the composition is skewed to acidic residues; the sequence is LNEDDSTDCDD. At serine 636 the chain carries Phosphoserine. Residues threonine 637 and threonine 667 each carry the phosphothreonine modification.

In terms of assembly, interacts with VHL. Interacts with MHC class I and HM13. Component of SCAP-SREBP complex composed of SREBF2, SCAP and RNF139; the complex hampers the interaction between SCAP and SEC24B, thereby reducing SREBF2 proteolytic processing. Interacts with SREBF2 (via C-terminal domain). Interacts with SCAP; the interaction inhibits the interaction of SCAP with SEC24B and hampering the ER to Golgi transport of the SCAP-SREBP complex. Interacts with SEC24B. Interacts with INSIG1 and INSIG2. Interacts with EIF3F and EIF3H; the interaction leads to protein translation inhibitions in a ubiquitination-dependent manner. Interacts with XBP1 isoform 1; the interaction induces ubiquitination and degradation of XBP1 isoform 1. Interacts with AUP1, AMFR and UBE2G2; interaction with AUP1 facilitates interaction of RNF139 with ubiquitin-conjugating enzyme UBE2G2 and ubiquitin ligase AMFR/gp78, leading to sterol-induced ubiquitination of HMGCR and its subsequent proteasomal degradation. Post-translationally, autoubiquitinated. Ubiquitination is induced by sterol and leads to ist degradation via the ubiquitin-proteasome pathway.

It localises to the endoplasmic reticulum membrane. The enzyme catalyses S-ubiquitinyl-[E2 ubiquitin-conjugating enzyme]-L-cysteine + [acceptor protein]-L-lysine = [E2 ubiquitin-conjugating enzyme]-L-cysteine + N(6)-ubiquitinyl-[acceptor protein]-L-lysine.. It functions in the pathway protein modification; protein ubiquitination. Functionally, E3-ubiquitin ligase; acts as a negative regulator of cell proliferation through mechanisms involving G2/M arrest and cell death. Required for MHC class I ubiquitination in cells expressing the cytomegalovirus protein US2 before dislocation from the endoplasmic reticulum (ER). Affects SREBP processing by hindering the SREBP-SCAP complex translocation from the ER to the Golgi, thereby reducing SREBF2 target gene expression. Involved in the sterol-accelerated degradation of HMGCR. This is achieved through binding to INSIG1 and/or INSIG2 at the ER membrane. In addition, interaction of RNF139 with AUP1 facilitates interaction of RNF139 with ubiquitin-conjugating enzyme UBE2G2 and ubiquitin ligase AMFR, leading to ubiquitination of HMGCR. The ubiquitinated HMGCR is then released from the ER by the complex into the cytosol for subsequent destruction. Required for INSIG1 ubiquitination. May be required for EIF3 complex ubiquitination. The polypeptide is E3 ubiquitin-protein ligase RNF139 (Mus musculus (Mouse)).